We begin with the raw amino-acid sequence, 319 residues long: Ankyrin repeat domain-containing protein 1 (319 aa).

A coiled-coil region spans residues 61–89 (KTEKQREAELKKKKLEQRSKLENLEDLEI). ANK repeat units lie at residues 152–181 (YKRT…QIEF), 185–214 (LEST…KISA), 218–247 (LLST…DLNA), 251–280 (EGDT…DLNV), and 284–315 (AGKT…KASR).

As to quaternary structure, interacts with TTN/titin and YBX1.

The protein resides in the nucleus. In terms of biological role, may play an important role in endothelial cell activation. May act as a nuclear transcription factor that negatively regulates the expression of cardiac genes. The sequence is that of Ankyrin repeat domain-containing protein 1 (ANKRD1) from Bos taurus (Bovine).